The following is a 497-amino-acid chain: Glycerol kinase (497 aa).

Thr-11 lines the ADP pocket. Thr-11, Thr-12, and Ser-13 together coordinate ATP. Thr-11 provides a ligand contact to sn-glycerol 3-phosphate. Arg-15 is an ADP binding site. Residues Arg-81, Glu-82, Tyr-134, and Asp-244 each contribute to the sn-glycerol 3-phosphate site. Positions 81, 82, 134, 244, and 245 each coordinate glycerol. Positions 266 and 309 each coordinate ADP. ATP is bound by residues Thr-266, Gly-309, Gln-313, and Gly-410. ADP-binding residues include Gly-410 and Asn-414.

The protein belongs to the FGGY kinase family.

It catalyses the reaction glycerol + ATP = sn-glycerol 3-phosphate + ADP + H(+). It participates in polyol metabolism; glycerol degradation via glycerol kinase pathway; sn-glycerol 3-phosphate from glycerol: step 1/1. Its activity is regulated as follows. Inhibited by fructose 1,6-bisphosphate (FBP). Its function is as follows. Key enzyme in the regulation of glycerol uptake and metabolism. Catalyzes the phosphorylation of glycerol to yield sn-glycerol 3-phosphate. The protein is Glycerol kinase of Fusobacterium nucleatum subsp. nucleatum (strain ATCC 25586 / DSM 15643 / BCRC 10681 / CIP 101130 / JCM 8532 / KCTC 2640 / LMG 13131 / VPI 4355).